The following is a 560-amino-acid chain: Dihydroxy-acid dehydratase (560 aa).

Cys50 lines the [2Fe-2S] cluster pocket. Asp82 contacts Mg(2+). Cys123 contacts [2Fe-2S] cluster. Mg(2+) contacts are provided by Asp124 and Lys125. At Lys125 the chain carries N6-carboxylysine. Residue Cys195 participates in [2Fe-2S] cluster binding. Glu446 provides a ligand contact to Mg(2+). Ser472 (proton acceptor) is an active-site residue.

It belongs to the IlvD/Edd family. In terms of assembly, homodimer. [2Fe-2S] cluster serves as cofactor. The cofactor is Mg(2+).

It catalyses the reaction (2R)-2,3-dihydroxy-3-methylbutanoate = 3-methyl-2-oxobutanoate + H2O. It carries out the reaction (2R,3R)-2,3-dihydroxy-3-methylpentanoate = (S)-3-methyl-2-oxopentanoate + H2O. It functions in the pathway amino-acid biosynthesis; L-isoleucine biosynthesis; L-isoleucine from 2-oxobutanoate: step 3/4. Its pathway is amino-acid biosynthesis; L-valine biosynthesis; L-valine from pyruvate: step 3/4. Functions in the biosynthesis of branched-chain amino acids. Catalyzes the dehydration of (2R,3R)-2,3-dihydroxy-3-methylpentanoate (2,3-dihydroxy-3-methylvalerate) into 2-oxo-3-methylpentanoate (2-oxo-3-methylvalerate) and of (2R)-2,3-dihydroxy-3-methylbutanoate (2,3-dihydroxyisovalerate) into 2-oxo-3-methylbutanoate (2-oxoisovalerate), the penultimate precursor to L-isoleucine and L-valine, respectively. The polypeptide is Dihydroxy-acid dehydratase (Leptothrix cholodnii (strain ATCC 51168 / LMG 8142 / SP-6) (Leptothrix discophora (strain SP-6))).